Here is a 168-residue protein sequence, read N- to C-terminus: Myosin regulatory light chain 11 (168 aa).

Position 2 is a n,N,N-trimethylalanine (alanine 2). Serine 15 is subject to Phosphoserine. EF-hand domains follow at residues 24–59 (TQIQ…MGRL), 94–129 (DPED…QCDR), and 130–165 (FTPE…GEDK). Ca(2+) contacts are provided by aspartate 37, asparagine 39, aspartate 41, and aspartate 48.

Myosin is a hexamer of 2 heavy chains and 4 light chains. The N-terminus is blocked. N,N,N-trimethylalanine, found in other myosin light chains would not have been detected in the N-terminal tryptic peptide in PubMed:7358336 because it would remain trimethylated and ninhydrin negative after hydrolysis.

Its function is as follows. Myosin regulatory subunit that plays an essential to maintain muscle integrity during early development. Plays a role in muscle contraction. This Gallus gallus (Chicken) protein is Myosin regulatory light chain 11 (MYL11).